Here is a 940-residue protein sequence, read N- to C-terminus: Translation initiation factor IF-2 (940 aa).

Low complexity-rich tracts occupy residues 138 to 147 and 161 to 208; these read APVEVVAEPE and PVVV…ITEL. Positions 138 to 354 are disordered; sequence APVEVVAEPE…DRQTFQAPTE (217 aa). 2 stretches are compositionally biased toward basic and acidic residues: residues 214–271 and 289–311; these read IAAR…EEAA and AKAD…DGAK. Positions 440-609 constitute a tr-type G domain; sequence PRAPVVTVMG…LLQAEVLELT (170 aa). The segment at 449–456 is G1; that stretch reads GHVDHGKT. 449-456 is a GTP binding site; that stretch reads GHVDHGKT. The G2 stretch occupies residues 474–478; sequence GITQH. The tract at residues 495 to 498 is G3; sequence DTPG. Residues 495–499 and 549–552 each bind GTP; these read DTPGH and TKID. The tract at residues 549–552 is G4; sequence TKID. Residues 585 to 587 form a G5 region; the sequence is SAK.

It belongs to the TRAFAC class translation factor GTPase superfamily. Classic translation factor GTPase family. IF-2 subfamily.

It localises to the cytoplasm. Its function is as follows. One of the essential components for the initiation of protein synthesis. Protects formylmethionyl-tRNA from spontaneous hydrolysis and promotes its binding to the 30S ribosomal subunits. Also involved in the hydrolysis of GTP during the formation of the 70S ribosomal complex. The sequence is that of Translation initiation factor IF-2 from Azoarcus sp. (strain BH72).